A 192-amino-acid chain; its full sequence is tRNA (cytidine(56)-2'-O)-methyltransferase (192 aa).

S-adenosyl-L-methionine is bound by residues L84 and 112–116 (GGEKV).

Belongs to the aTrm56 family. Homodimer.

The protein resides in the cytoplasm. The catalysed reaction is cytidine(56) in tRNA + S-adenosyl-L-methionine = 2'-O-methylcytidine(56) in tRNA + S-adenosyl-L-homocysteine + H(+). In terms of biological role, specifically catalyzes the AdoMet-dependent 2'-O-ribose methylation of cytidine at position 56 in tRNAs. The chain is tRNA (cytidine(56)-2'-O)-methyltransferase from Halobacterium salinarum (strain ATCC 700922 / JCM 11081 / NRC-1) (Halobacterium halobium).